The following is a 321-amino-acid chain: Cytoskeleton protein RodZ (321 aa).

The Cytoplasmic portion of the chain corresponds to 1–111 (MNTEATHDQN…LGKRRKKRDG (111 aa)). Residues 19–71 (LRNAREQLGLSQQAVAERLCLKVSTVRDIEEDKAPSDLASTFLRGYIRSYARL) enclose the HTH cro/C1-type domain. The H-T-H motif DNA-binding region spans 30 to 49 (QQAVAERLCLKVSTVRDIEE). The chain crosses the membrane as a helical; Signal-anchor for type II membrane protein span at residues 112–132 (WLMSFTWLVLFVVVGLTGAWW). At 133–321 (WQNHKAQQEE…TINAEPTSAQ (189 aa)) the chain is on the periplasmic side. The disordered stretch occupies residues 167 to 190 (DTRAAASQDTTPAETAPAAPVDST). Over residues 176-190 (TTPAETAPAAPVDST) the composition is skewed to low complexity.

This sequence belongs to the RodZ family.

It is found in the cell inner membrane. In terms of biological role, cytoskeletal protein that is involved in cell-shape control through regulation of the length of the long axis. In Salmonella arizonae (strain ATCC BAA-731 / CDC346-86 / RSK2980), this protein is Cytoskeleton protein RodZ.